Reading from the N-terminus, the 354-residue chain is uncharacterized protein (354 aa).

This sequence belongs to the band 7/mec-2 family.

The protein resides in the mitochondrion. This is an uncharacterized protein from Schizosaccharomyces pombe (strain 972 / ATCC 24843) (Fission yeast).